The sequence spans 312 residues: MAQSKILLYYKFTPIADPKAMMLWQRDMCELLGLKGRILISEHGINGTVGGDMDACKRYVRKMREYPGFRGTEFKWSDGGAEDFPKLSVKVRDEIVAFGAPGELKVDEKGVIGGGVHLKPEEVNKLVEERGDDVVFFDGRNAMEAQIGKFKNAVVPDVRTTHDFIRELESGKYDWMKDKPVVSYCTGGIRCEILSSLMKNRGFKEIYQIDGGIVRYGEKYGNDGLWEGSLYVFDRRMHMEFGNGVQDPGFIQLGHCVQCGAPTNKFEHCINEDECRELVLMCPDCYENPATRNCGREHCKEVAAEAAAAAAV.

In terms of domain architecture, Rhodanese spans R130–L225. The Cysteine persulfide intermediate role is filled by C185.

It belongs to the TrhO family.

The catalysed reaction is uridine(34) in tRNA + AH2 + O2 = 5-hydroxyuridine(34) in tRNA + A + H2O. Its function is as follows. Catalyzes oxygen-dependent 5-hydroxyuridine (ho5U) modification at position 34 in tRNAs. This chain is tRNA uridine(34) hydroxylase, found in Corynebacterium diphtheriae (strain ATCC 700971 / NCTC 13129 / Biotype gravis).